Reading from the N-terminus, the 221-residue chain is UPF0758 protein CGSHiEE_07200 (221 aa).

The 123-residue stretch at isoleucine 99–leucine 221 folds into the MPN domain. Histidine 170, histidine 172, and aspartate 183 together coordinate Zn(2+). The short motif at histidine 170–aspartate 183 is the JAMM motif element.

Belongs to the UPF0758 family.

This Haemophilus influenzae (strain PittEE) protein is UPF0758 protein CGSHiEE_07200.